Reading from the N-terminus, the 583-residue chain is Chromosomal replication initiator protein DnaA (583 aa).

A domain I, interacts with DnaA modulators region spans residues 1–91 (MNAENLDPAT…SPMFPAFKVM (91 aa)). Disordered regions lie at residues 86 to 179 (PAFK…QQPV) and 197 to 232 (VAGFGPSVAGTTAPQYPPQSEMQGSFTPGVTGNYRD). Positions 91 to 235 (MPPAQPEPQT…VTGNYRDPVT (145 aa)) are domain II. The segment covering 97-106 (EPQTTASPED) has biased composition (polar residues). Composition is skewed to basic and acidic residues over residues 126–135 (EDSRTPRHSA) and 147–174 (QEREDSAVHMARPDEQTAESHREPEHEP). A compositionally biased stretch (polar residues) spans 205 to 226 (AGTTAPQYPPQSEMQGSFTPGV). The segment at 236–460 (HLNSNDTFDT…GALKRVIAMA (225 aa)) is domain III, AAA+ region. Residues glycine 280, glycine 282, lysine 283, and threonine 284 each contribute to the ATP site. The domain IV, binds dsDNA stretch occupies residues 461–583 (SLNHQPVTRA…TVELKQHLND (123 aa)).

Belongs to the DnaA family. As to quaternary structure, oligomerizes as a right-handed, spiral filament on DNA at oriC.

The protein localises to the cytoplasm. Plays an essential role in the initiation and regulation of chromosomal replication. ATP-DnaA binds to the origin of replication (oriC) to initiate formation of the DNA replication initiation complex once per cell cycle. Binds the DnaA box (a 9 base pair repeat at the origin) and separates the double-stranded (ds)DNA. Forms a right-handed helical filament on oriC DNA; dsDNA binds to the exterior of the filament while single-stranded (ss)DNA is stabiized in the filament's interior. The ATP-DnaA-oriC complex binds and stabilizes one strand of the AT-rich DNA unwinding element (DUE), permitting loading of DNA polymerase. After initiation quickly degrades to an ADP-DnaA complex that is not apt for DNA replication. Binds acidic phospholipids. This Bifidobacterium animalis subsp. lactis (strain AD011) protein is Chromosomal replication initiator protein DnaA.